A 176-amino-acid polypeptide reads, in one-letter code: Protein MAL2 (176 aa).

Over 1–34 (MSAGGASVPPPPNPAVSFPPPRVTLPAGPDILRT) the chain is Cytoplasmic. The 145-residue stretch at 31–175 (ILRTYSGAFV…SLGLALRRWR (145 aa)) folds into the MARVEL domain. The chain crosses the membrane as a helical span at residues 35 to 55 (YSGAFVCLEILFGGLVWILVA). Over 56–66 (SSNVPLPLLQG) the chain is Lumenal. The chain crosses the membrane as a helical span at residues 67–87 (WVMFVSVTAFFFSLLFLGMFL). Topologically, residues 88–102 (SGMVAQIDANWNFLD) are cytoplasmic. Residues 103-123 (FAYHFTVFVFYFGAFLLEAAA) form a helical membrane-spanning segment. Topologically, residues 124–149 (TSLHDLHCNTTITGQPLLSDNQYNIN) are lumenal. Asn132 carries N-linked (GlcNAc...) asparagine glycosylation. The helical transmembrane segment at 150–170 (VAASIFAFMTTACYGCSLGLA) threads the bilayer. The Cytoplasmic segment spans residues 171–176 (LRRWRP).

The protein belongs to the MAL family. Interacts with TPD52L2. In terms of tissue distribution, predominantly expressed in kidney, lung, and liver. Also found in thyroid gland, stomach and, at lower levels in testis and small intestine.

It localises to the cell membrane. Its subcellular location is the apical cell membrane. The protein localises to the endomembrane system. It is found in the cytoplasm. The protein resides in the perinuclear region. Member of the machinery of polarized transport. Required for the indirect transcytotic route at the step of the egress of the transcytosing cargo from perinuclear endosomes in order for it to travel to the apical surface via a raft-dependent pathway. In Homo sapiens (Human), this protein is Protein MAL2 (MAL2).